The following is a 353-amino-acid chain: Inactive metacaspase-4 (353 aa).

Residue glycine 2 is the site of N-myristoyl glycine attachment.

Belongs to the peptidase C14B family. Palmitoylated. Post-translationally, proteolytic cleavage by MCA3 occurs prior or during secretion and requires MCA4 membrane localization. Cleavage is dispensable for secretion and parasite growth and virulence in the mammalian host. In vitro, can be cleaved by MCA2 but specifically cleaved by MCA3 in vivo.

It is found in the cell projection. The protein localises to the cilium. Its subcellular location is the flagellum membrane. It localises to the secreted. Functionally, inactive metacaspase which plays a role in parasite bloodstream form growth and in parasite virulence within the mammalian host. The sequence is that of Inactive metacaspase-4 from Trypanosoma brucei brucei.